The chain runs to 296 residues: Regulatory protein PchR (296 aa).

One can recognise an HTH araC/xylS-type domain in the interval 201-296 (HAARDLLVGA…RYGISPSEIR (96 aa)). 2 DNA-binding regions (H-T-H motif) span residues 218–239 (DTLASRVGMNPRKLTAGFRKVF) and 266–288 (VSTVAYRVGYSPAHFSIAFRKRY).

Functionally, positive activator of the genes for pyochelin and ferripyochelin receptors. This Pseudomonas aeruginosa (strain ATCC 15692 / DSM 22644 / CIP 104116 / JCM 14847 / LMG 12228 / 1C / PRS 101 / PAO1) protein is Regulatory protein PchR (pchR).